The primary structure comprises 305 residues: Superkiller complex protein 8 (305 aa).

7 WD repeats span residues 14-57, 62-101, 104-143, 146-187, 188-227, 230-269, and 272-305; these read AHED…LEMQ, GHQL…QIRS, AGPV…KEYS, TRGK…HTLE, GHAM…LAAT, GHGS…CVHT, and DHQD…DCPI.

The protein belongs to the SKI8 family. As to quaternary structure, component of the PAF1 complex. Component of the SKI complex.

The protein localises to the nucleus. It localises to the cytoplasm. Functionally, component of the PAF1 complex (PAF1C) which has multiple functions during transcription by RNA polymerase II and is implicated in regulation of development and maintenance of embryonic stem cell pluripotency. PAF1C associates with RNA polymerase II through interaction with POLR2A CTD non-phosphorylated and 'Ser-2'- and 'Ser-5'-phosphorylated forms and is involved in transcriptional elongation, acting both independently and synergistically with TCEA1 and in cooperation with the DSIF complex and HTATSF1. Also acts as a component of the SKI complex, a multiprotein complex that assists the RNA-degrading exosome during the mRNA decay and quality-control pathways. The SKI complex catalyzes mRNA extraction from 80S ribosomal complexes in the 3'-5' direction and channels mRNA to the cytosolic exosome for degradation. In Xenopus laevis (African clawed frog), this protein is Superkiller complex protein 8 (skic8).